A 311-amino-acid chain; its full sequence is tRNA dimethylallyltransferase (311 aa).

Residue Gly-11–Thr-18 coordinates ATP. A substrate-binding site is contributed by Thr-13 to Thr-18. An interaction with substrate tRNA region spans residues Asp-36 to Gln-39.

It belongs to the IPP transferase family. Monomer. Mg(2+) is required as a cofactor.

The enzyme catalyses adenosine(37) in tRNA + dimethylallyl diphosphate = N(6)-dimethylallyladenosine(37) in tRNA + diphosphate. In terms of biological role, catalyzes the transfer of a dimethylallyl group onto the adenine at position 37 in tRNAs that read codons beginning with uridine, leading to the formation of N6-(dimethylallyl)adenosine (i(6)A). This Clostridioides difficile (strain 630) (Peptoclostridium difficile) protein is tRNA dimethylallyltransferase.